We begin with the raw amino-acid sequence, 186 residues long: Tetratricopeptide repeat protein 36 (186 aa).

TPR repeat units lie at residues 48-81 (SKAL…LPDR), 83-115 (SAYN…SGGR), and 120-153 (RQSF…GSPF).

The protein belongs to the TTC36 family.

The sequence is that of Tetratricopeptide repeat protein 36 (Ttc36) from Mus musculus (Mouse).